Reading from the N-terminus, the 309-residue chain is Jacalin-related lectin 25 (309 aa).

Positions 8–190 (MFKVGPIGSQ…LTSIGIYVCP (183 aa)) constitute a Jacalin-type lectin domain.

It belongs to the jacalin lectin family.

This is Jacalin-related lectin 25 (JAL25) from Arabidopsis thaliana (Mouse-ear cress).